The primary structure comprises 329 residues: Tryptophan--tRNA ligase (329 aa).

ATP is bound by residues 9-11 (QPS) and 17-18 (GN). The 'HIGH' region motif lies at 10–18 (PSGIPTIGN). D133 serves as a coordination point for L-tryptophan. ATP is bound by residues 145-147 (GDD), V184, and 193-197 (KMSKS). Residues 193–197 (KMSKS) carry the 'KMSKS' region motif.

The protein belongs to the class-I aminoacyl-tRNA synthetase family. In terms of assembly, homodimer.

The protein resides in the cytoplasm. It carries out the reaction tRNA(Trp) + L-tryptophan + ATP = L-tryptophyl-tRNA(Trp) + AMP + diphosphate + H(+). Catalyzes the attachment of tryptophan to tRNA(Trp). The chain is Tryptophan--tRNA ligase from Staphylococcus epidermidis (strain ATCC 35984 / DSM 28319 / BCRC 17069 / CCUG 31568 / BM 3577 / RP62A).